The sequence spans 297 residues: MFNSNVKLGIAPIAWTNDDMPDLGKENTFEQCISEMALAGFKGSEVGNKYPRDVKVLKKALELRDMEIASAWFSAFLTTKPYEETEKAFIEHRDFLNAMGAKVIVVSEQGHSIQGQMETPIFDGKYVLNEEEWKTLAEGLNKLGALAKEKGMKLVYHHHMGTVVQTTEEIDKLMDLTDENLVYLLFDSGHLVYSGEDALEVLKKYVNRVKHVHLKDIRKEKVEEVKRDKLSFLQGVRKGAFTVPGDGDIDFEPIFKVLDDNNYEGYLLVEAEQDPAIANPLEYAIKARKYIKEKTNL.

This sequence belongs to the IolE/MocC family. It depends on glutathione as a cofactor. Requires Co(2+) as cofactor. The cofactor is Mn(2+).

The catalysed reaction is scyllo-inosose = 3D-3,5/4-trihydroxycyclohexane-1,2-dione + H2O. The protein operates within polyol metabolism; myo-inositol degradation into acetyl-CoA; acetyl-CoA from myo-inositol: step 2/7. In terms of biological role, catalyzes the dehydration of inosose (2-keto-myo-inositol, 2KMI or 2,4,6/3,5-pentahydroxycyclohexanone) to 3D-(3,5/4)-trihydroxycyclohexane-1,2-dione (D-2,3-diketo-4-deoxy-epi-inositol). This is Inosose dehydratase from Clostridium perfringens (strain ATCC 13124 / DSM 756 / JCM 1290 / NCIMB 6125 / NCTC 8237 / Type A).